We begin with the raw amino-acid sequence, 645 residues long: Threonine--tRNA ligase (645 aa).

Positions methionine 1 to threonine 61 constitute a TGS domain. Positions aspartate 243–proline 536 are catalytic. Zn(2+) contacts are provided by cysteine 336, histidine 387, and histidine 513.

This sequence belongs to the class-II aminoacyl-tRNA synthetase family. Homodimer. The cofactor is Zn(2+).

The protein resides in the cytoplasm. It carries out the reaction tRNA(Thr) + L-threonine + ATP = L-threonyl-tRNA(Thr) + AMP + diphosphate + H(+). In terms of biological role, catalyzes the attachment of threonine to tRNA(Thr) in a two-step reaction: L-threonine is first activated by ATP to form Thr-AMP and then transferred to the acceptor end of tRNA(Thr). Also edits incorrectly charged L-seryl-tRNA(Thr). The chain is Threonine--tRNA ligase from Gluconobacter oxydans (strain 621H) (Gluconobacter suboxydans).